The primary structure comprises 412 residues: AT-rich interactive domain-containing protein 3C (412 aa).

Residues 1-23 (MEALQKQQAARLAQGVGPLAPAC) are compositionally biased toward low complexity. Positions 1–96 (MEALQKQQAA…SSQPPGLHPH (96 aa)) are disordered. Over residues 50–73 (AEEEEDAEEDEEKREEAGAEEEAA) the composition is skewed to acidic residues. Low complexity predominate over residues 78–87 (PGAQGPSSPS). The ARID domain occupies 113-205 (DPKRKEFLDD…YLYPYECETR (93 aa)). 2 disordered regions span residues 232–278 (TPLF…AHAC) and 388–412 (PVPA…SILP). The span at 259–272 (TQSSPGPAQGSTSG) shows a compositional bias: polar residues. The REKLES domain occupies 304–389 (LALGPTREKL…GVLFARRQPV (86 aa)).

Interacts (via REKLES DOMAIN) with NPM1; the interaction mediates ARID3C nuclear shuttling.

Its subcellular location is the nucleus. Functionally, transcription factor involved in monocyte-to-macrophage differentiation. Forms a complex with NPM1 to translocate to the nucleus, acting as a transcription factor that promotes the expression of the genes involved in macrophage differentiation, such as STAT3, STAT1 and JUNB. This is AT-rich interactive domain-containing protein 3C from Homo sapiens (Human).